Here is a 195-residue protein sequence, read N- to C-terminus: U8 snoRNA-decapping enzyme (195 aa).

A Nudix hydrolase domain is found at 18–168 (GWRHACHALL…LENTFIGNAR (151 aa)). 3 residues coordinate substrate: His-24, Arg-50, and Phe-57. Mn(2+)-binding residues include Gly-59, Glu-76, Glu-80, and His-99. The short motif at 61-82 (FVDLRDGSLEDGLNRELGEELG) is the Nudix box element. Substrate-binding residues include Asn-166 and Gln-170. Glu-173 is a Mn(2+) binding site.

This sequence belongs to the Nudix hydrolase family. NUDT16 subfamily. As to quaternary structure, homodimer. Requires Mg(2+) as cofactor. Mn(2+) is required as a cofactor. Co(2+) serves as cofactor.

It is found in the nucleus. The protein localises to the nucleolus. It localises to the nucleoplasm. The protein resides in the cytoplasm. The catalysed reaction is a 5'-end (N(7)-methyl 5'-triphosphoguanosine)-ribonucleoside in mRNA + H2O = N(7)-methyl-GDP + a 5'-end phospho-ribonucleoside in mRNA + 2 H(+). It catalyses the reaction IDP + H2O = IMP + phosphate + H(+). The enzyme catalyses dIDP + H2O = dIMP + phosphate + H(+). It carries out the reaction a 5'-end NAD(+)-phospho-ribonucleoside in mRNA + H2O = a 5'-end phospho-ribonucleoside in mRNA + NAD(+) + H(+). The catalysed reaction is a 5'-end FAD-phospho-ribonucleoside in mRNA + H2O = a 5'-end phospho-adenosine-phospho-ribonucleoside in mRNA + FMN + 2 H(+). It catalyses the reaction a 5'-end CoA-ribonucleoside in mRNA + H2O = a 5'-end phospho-adenosine-phospho-ribonucleoside in mRNA + (R)-4'-phosphopantetheine + 2 H(+). RNA-binding and decapping enzyme that catalyzes the cleavage of the cap structure of snoRNAs and mRNAs in a metal-dependent manner. Part of the U8 snoRNP complex that is required for the accumulation of mature 5.8S and 28S rRNA. Has diphosphatase activity and removes m7G and/or m227G caps from U8 snoRNA and leaves a 5'monophosphate on the RNA. Also catalyzes the cleavage of the cap structure on mRNAs. Does not hydrolyze cap analog structures like 7-methylguanosine nucleoside triphosphate (m7GpppG). Also hydrolysis m7G- and m227G U3-capped RNAs but with less efficiencies. Has broad substrate specificity with manganese or cobalt as cofactor and can act on various RNA species. Binds to the U8 snoRNA; metal is not required for RNA-binding. May play a role in the regulation of snoRNAs and mRNAs degradation. Also acts as a phosphatase; hydrolyzes the non-canonical purine nucleotides inosine diphosphate (IDP) and deoxyinosine diphosphate (dITP) as well as guanosine diphosphate (GDP), deoxyguanosine diphosphate (dGDP), xanthine diphosphate (XDP), inosine triphosphate (ITP) and deoxyinosine triphosphate (ITP) to their respective monophosphate derivatives and does not distinguish between the deoxy- and ribose forms. The order of activity with different substrates is IDP &gt; dIDP &gt;&gt; GDP = dGDP &gt; XDP = ITP = dITP. Binds strongly to GTP, ITP and XTP. Participates in the hydrolysis of dIDP/IDP and probably excludes non-canonical purines from RNA and DNA precursor pools, thus preventing their incorporation into RNA and DNA and avoiding chromosomal lesions. Exhibits decapping activity towards NAD-capped RNAs and FAD-capped RNAs. Exhibits decapping activity towards dpCoA-capped RNAs in vitro. This chain is U8 snoRNA-decapping enzyme (NUDT16), found in Bos taurus (Bovine).